A 211-amino-acid polypeptide reads, in one-letter code: MGKRWQAERKRDHYYRSAKKENYRSRASYKLLQLNNKYKLIKKGDRVLDLGAAPGGWSQVALDKVGEEGLVVAVDLQRIKGFPAENFRAIRGDFTDPEVKDKIIRELGGRADVVISDAAPSLSGIRDIDHLRSVDLVENVLDIAYRVLDRKGNILIKAFQGPELDRVIKELRKDFWKLKTTKPASSRKASAEMYIVGRDFKGKEKWERIIH.

Residues glycine 55, tryptophan 57, aspartate 75, aspartate 93, and aspartate 117 each contribute to the S-adenosyl-L-methionine site. Residue lysine 157 is the Proton acceptor of the active site.

It belongs to the class I-like SAM-binding methyltransferase superfamily. RNA methyltransferase RlmE family.

The protein resides in the cytoplasm. It carries out the reaction uridine(2552) in 23S rRNA + S-adenosyl-L-methionine = 2'-O-methyluridine(2552) in 23S rRNA + S-adenosyl-L-homocysteine + H(+). In terms of biological role, specifically methylates the uridine in position 2552 of 23S rRNA at the 2'-O position of the ribose in the fully assembled 50S ribosomal subunit. The polypeptide is Ribosomal RNA large subunit methyltransferase E (Methanothermobacter thermautotrophicus (strain ATCC 29096 / DSM 1053 / JCM 10044 / NBRC 100330 / Delta H) (Methanobacterium thermoautotrophicum)).